Here is a 115-residue protein sequence, read N- to C-terminus: MYAIIKTGGKQYRVTEGQMLKVEKLAQDVGQSVKFDDVLMVAAGDELHIGTPSVKDAAVTAEVVDQGRQAKIEIIKFKRRKHHMKRQGHRQDFTAVKITEIALGKAKKEVKTDGA.

The protein belongs to the bacterial ribosomal protein bL21 family. Part of the 50S ribosomal subunit. Contacts protein L20.

This protein binds to 23S rRNA in the presence of protein L20. The sequence is that of Large ribosomal subunit protein bL21 from Coxiella burnetii (strain RSA 331 / Henzerling II).